Here is an 864-residue protein sequence, read N- to C-terminus: N-alpha-acetyltransferase 16, NatA auxiliary subunit (864 aa).

TPR repeat units lie at residues 46–79, 80–113, 148–184, 224–257, 374–407, 409–441, and 485–518; these read GETL…DVKS, HVCW…DKDN, RASW…PPNK, LLVE…NAEN, LWVQ…TPTL, ELFY…DTAD, and MWFQ…FFEI. The interval 603-638 is disordered; sequence QKKAKLEEERKHAERERQQKNQKKKRDEEEEEASGL. Residues 606 to 621 are compositionally biased toward basic and acidic residues; sequence AKLEEERKHAERERQQ.

As to quaternary structure, component of the N-terminal acetyltransferase A (NatA) complex composed of NAA10 and NAA16.

Functionally, auxillary subunit of the N-terminal acetyltransferase A (NatA) complex which displays alpha (N-terminal) acetyltransferase activity. The sequence is that of N-alpha-acetyltransferase 16, NatA auxiliary subunit (NAA16) from Homo sapiens (Human).